Consider the following 253-residue polypeptide: uncharacterized protein (253 aa).

NADP(+) is bound by residues isoleucine 17, serine 36, aspartate 62, asparagine 89, tyrosine 158, lysine 162, valine 191, and threonine 193. The active-site Proton donor is the tyrosine 158. Lysine 162 functions as the Lowers pKa of active site Tyr in the catalytic mechanism.

This sequence belongs to the short-chain dehydrogenases/reductases (SDR) family.

It is found in the cytoplasm. It localises to the nucleus. This is an uncharacterized protein from Schizosaccharomyces pombe (strain 972 / ATCC 24843) (Fission yeast).